We begin with the raw amino-acid sequence, 211 residues long: uncharacterized protein (211 aa).

Residues 105-143 (IEENEFDKVRKSSDKLINEIEKTKSSLREDVKTALSEVR) are a coiled coil. A helical membrane pass occupies residues 191–211 (QWFTGFVGVVSSVVLIILFYF).

It belongs to the CCDC90 family.

The protein resides in the mitochondrion. Its subcellular location is the membrane. This is an uncharacterized protein from Schizosaccharomyces pombe (strain 972 / ATCC 24843) (Fission yeast).